Consider the following 389-residue polypeptide: Xylose isomerase (389 aa).

Active-site residues include histidine 101 and aspartate 104. Residues glutamate 232, glutamate 268, histidine 271, aspartate 296, aspartate 307, and aspartate 309 each coordinate Mg(2+).

Belongs to the xylose isomerase family. In terms of assembly, homotetramer. Mg(2+) is required as a cofactor.

It is found in the cytoplasm. It carries out the reaction alpha-D-xylose = alpha-D-xylulofuranose. The protein is Xylose isomerase of Lactococcus lactis subsp. cremoris (strain SK11).